The chain runs to 715 residues: Zinc finger protein 544 (715 aa).

The 72-residue stretch at 14 to 85 (VCFEDVAMAF…EQEAPRDWKA (72 aa)) folds into the KRAB domain. Glycyl lysine isopeptide (Lys-Gly) (interchain with G-Cter in SUMO2) cross-links involve residues lysine 273 and lysine 289. The segment at 354–374 (SVCNQCGKSFSCCKLIHQRTH) adopts a C2H2-type 1; atypical zinc-finger fold. 12 C2H2-type zinc fingers span residues 380–402 (FECT…QRTH), 408–430 (YECD…QRIH), 436–458 (YQCI…QRIH), 464–486 (YECT…KRTH), 492–514 (FKCT…QRTH), 520–542 (YECN…QRIH), 548–570 (YQCI…QRIH), 576–598 (YDCT…KRTH), 604–626 (YECN…LQIH), 632–654 (YKCN…QRTH), 660–682 (FECS…HRIH), and 688–710 (YECS…RRTH). Residue lysine 534 forms a Glycyl lysine isopeptide (Lys-Gly) (interchain with G-Cter in SUMO2) linkage.

The protein belongs to the krueppel C2H2-type zinc-finger protein family.

Its subcellular location is the nucleus. May be involved in transcriptional regulation. The protein is Zinc finger protein 544 (ZNF544) of Homo sapiens (Human).